We begin with the raw amino-acid sequence, 616 residues long: DNA mismatch repair protein MutL (616 aa).

Belongs to the DNA mismatch repair MutL/HexB family.

This protein is involved in the repair of mismatches in DNA. It is required for dam-dependent methyl-directed DNA mismatch repair. May act as a 'molecular matchmaker', a protein that promotes the formation of a stable complex between two or more DNA-binding proteins in an ATP-dependent manner without itself being part of a final effector complex. In Syntrophus aciditrophicus (strain SB), this protein is DNA mismatch repair protein MutL.